Reading from the N-terminus, the 208-residue chain is Large ribosomal subunit protein eL13 (208 aa).

Residues Ser177 and Ser180 each carry the phosphoserine modification.

The protein belongs to the eukaryotic ribosomal protein eL13 family. Component of the large ribosomal subunit (LSU). Mature yeast ribosomes consist of a small (40S) and a large (60S) subunit. The 40S small subunit contains 1 molecule of ribosomal RNA (18S rRNA) and at least 33 different proteins. The large 60S subunit contains 3 rRNA molecules (25S, 5.8S and 5S rRNA) and at least 46 different proteins.

The protein localises to the cytoplasm. Its function is as follows. Component of the ribosome, a large ribonucleoprotein complex responsible for the synthesis of proteins in the cell. The small ribosomal subunit (SSU) binds messenger RNAs (mRNAs) and translates the encoded message by selecting cognate aminoacyl-transfer RNA (tRNA) molecules. The large subunit (LSU) contains the ribosomal catalytic site termed the peptidyl transferase center (PTC), which catalyzes the formation of peptide bonds, thereby polymerizing the amino acids delivered by tRNAs into a polypeptide chain. The nascent polypeptides leave the ribosome through a tunnel in the LSU and interact with protein factors that function in enzymatic processing, targeting, and the membrane insertion of nascent chains at the exit of the ribosomal tunnel. In Schizosaccharomyces pombe (strain 972 / ATCC 24843) (Fission yeast), this protein is Large ribosomal subunit protein eL13 (rpl13).